Consider the following 496-residue polypeptide: Cobyric acid synthase (496 aa).

The 188-residue stretch at 250–437 (TLKVIAPALP…LHGLFESPQA (188 aa)) folds into the GATase cobBQ-type domain. Cys-331 serves as the catalytic Nucleophile. Residue His-429 is part of the active site.

Belongs to the CobB/CobQ family. CobQ subfamily.

It participates in cofactor biosynthesis; adenosylcobalamin biosynthesis. Its function is as follows. Catalyzes amidations at positions B, D, E, and G on adenosylcobyrinic A,C-diamide. NH(2) groups are provided by glutamine, and one molecule of ATP is hydrogenolyzed for each amidation. This is Cobyric acid synthase from Hahella chejuensis (strain KCTC 2396).